A 433-amino-acid polypeptide reads, in one-letter code: Histidinol dehydrogenase homolog (433 aa).

Zn(2+)-binding residues include Q249 and H252. Residues E319 and H320 each act as proton acceptor in the active site. Residues D353 and H412 each contribute to the Zn(2+) site.

Belongs to the histidinol dehydrogenase family. It depends on Zn(2+) as a cofactor.

This chain is Histidinol dehydrogenase homolog, found in Ruegeria pomeroyi (strain ATCC 700808 / DSM 15171 / DSS-3) (Silicibacter pomeroyi).